Consider the following 250-residue polypeptide: Iron-sulfur assembly protein 1 (250 aa).

Residues 54-89 (AADSVSPDSQRPGKKPFKFIVSNQSKSSKASKSPKW) are disordered. Residues 75 to 89 (SNQSKSSKASKSPKW) are compositionally biased toward low complexity. Fe cation contacts are provided by Cys-178, Cys-242, and Cys-244.

This sequence belongs to the HesB/IscA family.

The protein resides in the mitochondrion matrix. Its function is as follows. Involved in the assembly of mitochondrial and cytoplasmic iron-sulfur proteins. Probably involved in the binding of an intermediate of Fe/S cluster assembly. The polypeptide is Iron-sulfur assembly protein 1 (ISA1) (Saccharomyces cerevisiae (strain ATCC 204508 / S288c) (Baker's yeast)).